Reading from the N-terminus, the 189-residue chain is Cell division protein SepF (189 aa).

Residues 152–163 are compositionally biased toward polar residues; it reads FQEEPSPSSVMN. The tract at residues 152–189 is disordered; it reads FQEEPSPSSVMNKDNEGPVSESVMAPEPAWGASVPSAI.

The protein belongs to the SepF family. In terms of assembly, homodimer. Interacts with FtsZ.

The protein resides in the cytoplasm. Functionally, cell division protein that is part of the divisome complex and is recruited early to the Z-ring. Probably stimulates Z-ring formation, perhaps through the cross-linking of FtsZ protofilaments. Its function overlaps with FtsA. This is Cell division protein SepF from Prochlorococcus marinus (strain SARG / CCMP1375 / SS120).